Here is a 194-residue protein sequence, read N- to C-terminus: Xanthine phosphoribosyltransferase (194 aa).

Leu-20 and Asn-27 together coordinate xanthine. 128–132 serves as a coordination point for 5-phospho-alpha-D-ribose 1-diphosphate; the sequence is ANGEA. Lys-156 lines the xanthine pocket.

This sequence belongs to the purine/pyrimidine phosphoribosyltransferase family. Xpt subfamily. As to quaternary structure, homodimer.

It localises to the cytoplasm. It carries out the reaction XMP + diphosphate = xanthine + 5-phospho-alpha-D-ribose 1-diphosphate. The protein operates within purine metabolism; XMP biosynthesis via salvage pathway; XMP from xanthine: step 1/1. In terms of biological role, converts the preformed base xanthine, a product of nucleic acid breakdown, to xanthosine 5'-monophosphate (XMP), so it can be reused for RNA or DNA synthesis. The sequence is that of Xanthine phosphoribosyltransferase from Macrococcus caseolyticus (strain JCSC5402) (Macrococcoides caseolyticum).